The following is a 156-amino-acid chain: Small ribosomal subunit protein uS7 (156 aa).

This sequence belongs to the universal ribosomal protein uS7 family. As to quaternary structure, part of the 30S ribosomal subunit. Contacts proteins S9 and S11.

Functionally, one of the primary rRNA binding proteins, it binds directly to 16S rRNA where it nucleates assembly of the head domain of the 30S subunit. Is located at the subunit interface close to the decoding center, probably blocks exit of the E-site tRNA. The polypeptide is Small ribosomal subunit protein uS7 (Xanthobacter autotrophicus (strain ATCC BAA-1158 / Py2)).